Reading from the N-terminus, the 520-residue chain is UBX domain-containing protein 11 (520 aa).

Positions Met1–Arg26 are disordered. Residues Met76 to Asp149 adopt a coiled-coil conformation. In terms of domain architecture, SEP spans Leu230–Leu294. Positions Pro392–Leu469 constitute a UBX domain. Residues Lys476–Gln520 are disordered. Residues Gly484–Gln520 are compositionally biased toward pro residues. Repeat copies occupy residues Pro487 to Ser494, Pro495 to Ser502, and Pro503 to Ser510. Residues Pro487–Ser510 form a 3 X 8 AA tandem repeats of P-G-P-G-P-G-P-S region.

As to quaternary structure, interacts with GNA12, GNA13, RND1, RND2 and RND3.

Its subcellular location is the cytoplasm. The protein localises to the cytoskeleton. May be involved in the reorganization of actin cytoskeleton mediated by RND1, RND2 and RND3. Promotes RHOA activation mediated by GNA12 and GNA13. The polypeptide is UBX domain-containing protein 11 (UBXN11) (Homo sapiens (Human)).